A 304-amino-acid chain; its full sequence is DnaJ homolog subfamily C member 17 (304 aa).

One can recognise a J domain in the interval Asp11–Arg76. The span at Lys79–Gln106 shows a compositional bias: basic and acidic residues. The tract at residues Lys79 to Leu145 is disordered. Ser112 carries the post-translational modification Phosphoserine. Residues Ser118 to Leu145 are compositionally biased toward basic and acidic residues. The region spanning Lys178–Gly249 is the RRM domain. Position 264 is an N6-methyllysine (Lys264).

The protein resides in the cytoplasm. It localises to the nucleus. Its function is as follows. May negatively affect PAX8-induced thyroglobulin/TG transcription. This chain is DnaJ homolog subfamily C member 17 (DNAJC17), found in Homo sapiens (Human).